Reading from the N-terminus, the 461-residue chain is TWiK family of potassium channels protein 18 (461 aa).

The Cytoplasmic segment spans residues 1–21 (MAIVAQGVSTILTTFQKTFKG). Residues 22 to 42 (LLPLIILVAYTLLGAWIFWMI) form a helical membrane-spanning segment. N-linked (GlcNAc...) asparagine glycosylation occurs at Asn-88. The pore-forming intramembrane region spans 116–136 (FLGSIFYCMTVYTTIGYGNIV). Residues 144-164 (FATILYAFIGIPLTVLSLYCL) form a helical membrane-spanning segment. The Cytoplasmic segment spans residues 165–224 (GSLFAKGCKMLWRFFLKSTRVVSKDLSNKISEAADNIEEGTTAITPSAEKTENNDDDLLS). Residues 225–245 (FPISGLLLITVIWVIFCAVLF) traverse the membrane as a helical segment. Residues 253–273 (FGTSLYFTLISFTTIGFGDIL) constitute an intramembrane region (pore-forming). The helical transmembrane segment at 281–301 (PIVGVLLLIGLSLVSTVMTLI) threads the bilayer. The Cytoplasmic portion of the chain corresponds to 302–461 (QQQIEALASG…GNEDYLEHDI (160 aa)). The disordered stretch occupies residues 328 to 347 (REDGEVDEHVDPEEDPENNK).

This sequence belongs to the two pore domain potassium channel (TC 1.A.1.8) family. Expressed in body wall muscle.

The protein localises to the membrane. In terms of biological role, outwardly rectifying potassium channel protein; activity is sharply augmented by increase in temperature. The chain is TWiK family of potassium channels protein 18 (twk-18) from Caenorhabditis elegans.